We begin with the raw amino-acid sequence, 362 residues long: ATP synthase F(1) complex catalytic subunit beta, mitochondrial (362 aa).

Position 14 is an N6-acetyllysine; alternate (lysine 14). Residue lysine 14 is modified to N6-succinyllysine; alternate. Lysine 51 bears the N6-acetyllysine mark. Valine 62, valine 63, glycine 64, lysine 65, threonine 66, and valine 67 together coordinate ADP. ATP is bound at residue valine 62. Residues valine 62, valine 63, glycine 64, lysine 65, and threonine 66 each coordinate phosphate. ATP contacts are provided by glycine 64, lysine 65, threonine 66, and valine 67. Threonine 66 serves as a coordination point for Mg(2+). Position 91 (glutamate 91) interacts with Mg(2+). 2 positions are modified to N6-acetyllysine; alternate: lysine 112 and lysine 117. An N6-succinyllysine; alternate mark is found at lysine 112 and lysine 117. The residue at position 165 (threonine 165) is a Phosphothreonine. At lysine 279 the chain carries N6-acetyllysine. At serine 286 the chain carries Phosphoserine. N6-acetyllysine occurs at positions 333 and 338.

This sequence belongs to the ATPase alpha/beta chains family. Homotrimer. Component of the ATP synthase complex composed at least of ATP5F1A/subunit alpha, ATP5F1B/subunit beta, ATP5MC1/subunit c (homooctomer), MT-ATP6/subunit a, MT-ATP8/subunit 8, ATP5ME/subunit e, ATP5MF/subunit f, ATP5MG/subunit g, ATP5MK/subunit k, ATP5MJ/subunit j, ATP5F1C/subunit gamma, ATP5F1D/subunit delta, ATP5F1E/subunit epsilon, ATP5PF/subunit F6, ATP5PB/subunit b, ATP5PD/subunit d, ATP5PO/subunit OSCP. ATP synthase complex consists of a soluble F(1) head domain (subunits alpha(3) and beta(3)) - the catalytic core - and a membrane F(0) domain - the membrane proton channel (subunits c, a, 8, e, f, g, k and j). These two domains are linked by a central stalk (subunits gamma, delta, and epsilon) rotating inside the F1 region and a stationary peripheral stalk (subunits F6, b, d, and OSCP). Interacts with PPIF. Interacts with BCL2L1 isoform BCL-X(L); the interaction mediates the association of BCL2L1 isoform BCL-X(L) with the mitochondrial membrane F(1)F(0) ATP synthase and enhances neurons metabolic efficiency. Interacts with CLN5 and PPT1. Interacts with S100A1; this interaction increases F1-ATPase activity. Interacts with MTLN. Interacts with TTC5/STRAP; the interaction results in decreased mitochondrial ATP production.

Its subcellular location is the mitochondrion inner membrane. The enzyme catalyses ATP + H2O + 4 H(+)(in) = ADP + phosphate + 5 H(+)(out). Functionally, catalytic subunit beta, of the mitochondrial membrane ATP synthase complex (F(1)F(0) ATP synthase or Complex V) that produces ATP from ADP in the presence of a proton gradient across the membrane which is generated by electron transport complexes of the respiratory chain. ATP synthase complex consist of a soluble F(1) head domain - the catalytic core - and a membrane F(1) domain - the membrane proton channel. These two domains are linked by a central stalk rotating inside the F(1) region and a stationary peripheral stalk. During catalysis, ATP synthesis in the catalytic domain of F(1) is coupled via a rotary mechanism of the central stalk subunits to proton translocation. In vivo, can only synthesize ATP although its ATP hydrolase activity can be activated artificially in vitro. With the subunit alpha (ATP5F1A), forms the catalytic core in the F(1) domain. The protein is ATP synthase F(1) complex catalytic subunit beta, mitochondrial of Mesocricetus auratus (Golden hamster).